A 137-amino-acid chain; its full sequence is uncharacterized protein (137 aa).

A helical membrane pass occupies residues 4 to 21 (ISWQIVLAVIGVVAGFII).

It localises to the membrane. This is an uncharacterized protein from Archaeoglobus fulgidus (strain ATCC 49558 / DSM 4304 / JCM 9628 / NBRC 100126 / VC-16).